The primary structure comprises 155 residues: Small ribosomal subunit protein uS7c (155 aa).

The protein belongs to the universal ribosomal protein uS7 family. Part of the 30S ribosomal subunit.

It is found in the plastid. The protein resides in the chloroplast. One of the primary rRNA binding proteins, it binds directly to 16S rRNA where it nucleates assembly of the head domain of the 30S subunit. The polypeptide is Small ribosomal subunit protein uS7c (rps7) (Saruma henryi (Upright wild ginger)).